Reading from the N-terminus, the 459-residue chain is Transcriptional coactivator YAP1 (459 aa).

Ser-21, Ser-69, Ser-87, and Ser-119 each carry phosphoserine; by LATS1 and LATS2. Disordered regions lie at residues 51–88 (LPDSFFKPPEPKSHSRQASTDAGSGGVLTPHHVRAHSS) and 103–129 (SGMASAGASPQHLRQSSYEIPDDVPLP). WW domains lie at 126–159 (VPLPPGWEMAKTSSGQRYFLNHIDQTTTWQDPRK) and 186–219 (GPLPEGWEQAITPEGEIYYINHKNKTTSWLDPRL). 2 disordered regions span residues 231–254 (TQSAPVKQGGPLPPNPHGGVMGGN) and 307–364 (PTSM…SSYS). The tract at residues 247-459 (HGGVMGGNNQ…IDKESFLTWL (213 aa)) is transactivation domain. 2 stretches are compositionally biased toward polar residues: residues 307–347 (PTSM…SGTY) and 355–364 (DSGLSMSSYS).

The protein belongs to the YAP1 family. Post-translationally, phosphorylated by lats1 and lats2; leading to cytoplasmic translocation and inactivation. In terms of tissue distribution, ubiquitously expressed throughout development.

It is found in the cytoplasm. The protein resides in the nucleus. It localises to the cell junction. Its subcellular location is the tight junction. The protein localises to the cell membrane. Its function is as follows. Transcriptional regulator which can act both as a coactivator and a corepressor and is the critical downstream regulatory target in the Hippo signaling pathway that plays a pivotal role in organ size control and tumor suppression by restricting proliferation and promoting apoptosis. Plays a key role in tissue tension and 3D tissue shape by regulating cortical actomyosin network formation. In Oryzias latipes (Japanese rice fish), this protein is Transcriptional coactivator YAP1.